A 133-amino-acid chain; its full sequence is Ribosome-binding factor A (133 aa).

This sequence belongs to the RbfA family. As to quaternary structure, monomer. Binds 30S ribosomal subunits, but not 50S ribosomal subunits or 70S ribosomes.

It localises to the cytoplasm. One of several proteins that assist in the late maturation steps of the functional core of the 30S ribosomal subunit. Associates with free 30S ribosomal subunits (but not with 30S subunits that are part of 70S ribosomes or polysomes). Required for efficient processing of 16S rRNA. May interact with the 5'-terminal helix region of 16S rRNA. In Salmonella typhi, this protein is Ribosome-binding factor A.